A 144-amino-acid chain; its full sequence is Fluoride-specific ion channel FluC (144 aa).

The next 4 helical transmembrane spans lie at 7-27, 33-53, 71-91, and 105-125; these read LIVMVGGALGTLARYLVSVAA, FIPWGTILPINALGSFVIGFF, LFVMIGLCGGYTTFSSFSLQT, and VNVAASVILCIGAVALGHITA. 2 residues coordinate Na(+): Gly79 and Thr82.

The protein belongs to the fluoride channel Fluc/FEX (TC 1.A.43) family.

It is found in the cell inner membrane. The catalysed reaction is fluoride(in) = fluoride(out). Na(+) is not transported, but it plays an essential structural role and its presence is essential for fluoride channel function. In terms of biological role, fluoride-specific ion channel. Important for reducing fluoride concentration in the cell, thus reducing its toxicity. This is Fluoride-specific ion channel FluC from Gluconobacter oxydans (strain 621H) (Gluconobacter suboxydans).